The primary structure comprises 360 residues: MTSAALKPLSVAPARDRAASRPRIAVRRWLFLMAALVVAMVAVGGATRLTGSGLSITEWKPVTGAVPPLSAEAWAEEFAKYRATPQYDILNRGMSLAEFQVIYAWEWGHRFLGRLIGLCFFLPLGWFWWTGRLDRRLGLGLVGLGVLGGLQGAVGWIMVASGLQPGMVAVAPIKLAAHLTLASAIFAGLVWLAAGLDRPAEAAAPRRLRLTALLLPVATLLQIALGGLVAGSKAGLTYNTWPLMDGAFIPPVSGLFAATPWIENFVDNVALVQLNHRLVAYALLALALLHALDARRARPGSGAARRAAALAGLVAAQAMLGITTLLLAVPLWAGLAHQVTAMLVLGMAVAHARIGTLARG.

Transmembrane regions (helical) follow at residues 29–49, 111–131, 139–159, 175–195, 210–230, 269–289, 309–329, and 330–350; these read WLFL…ATRL, FLGR…WWTG, LGLV…WIMV, LAAH…LAAG, LTAL…GLVA, VALV…LALL, ALAG…LLAV, and PLWA…MAVA. Histidine 276 contacts heme. Histidine 337 serves as a coordination point for heme.

The protein belongs to the COX15/CtaA family. Type 2 subfamily. As to quaternary structure, interacts with CtaB. Requires heme b as cofactor.

It is found in the cell membrane. It catalyses the reaction Fe(II)-heme o + 2 A + H2O = Fe(II)-heme a + 2 AH2. The protein operates within porphyrin-containing compound metabolism; heme A biosynthesis; heme A from heme O: step 1/1. Catalyzes the conversion of heme O to heme A by two successive hydroxylations of the methyl group at C8. The first hydroxylation forms heme I, the second hydroxylation results in an unstable dihydroxymethyl group, which spontaneously dehydrates, resulting in the formyl group of heme A. This Methylobacterium sp. (strain 4-46) protein is Heme A synthase.